The sequence spans 124 residues: Large ribosomal subunit protein bL12 (124 aa).

This sequence belongs to the bacterial ribosomal protein bL12 family. In terms of assembly, homodimer. Part of the ribosomal stalk of the 50S ribosomal subunit. Forms a multimeric L10(L12)X complex, where L10 forms an elongated spine to which 2 to 4 L12 dimers bind in a sequential fashion. Binds GTP-bound translation factors.

Functionally, forms part of the ribosomal stalk which helps the ribosome interact with GTP-bound translation factors. Is thus essential for accurate translation. This is Large ribosomal subunit protein bL12 from Idiomarina loihiensis (strain ATCC BAA-735 / DSM 15497 / L2-TR).